Here is a 71-residue protein sequence, read N- to C-terminus: Small ribosomal subunit protein bS21 (71 aa).

It belongs to the bacterial ribosomal protein bS21 family.

The chain is Small ribosomal subunit protein bS21 from Marinobacter nauticus (strain ATCC 700491 / DSM 11845 / VT8) (Marinobacter aquaeolei).